The following is a 142-amino-acid chain: Large ribosomal subunit protein uL13 (142 aa).

It belongs to the universal ribosomal protein uL13 family. In terms of assembly, part of the 50S ribosomal subunit.

Functionally, this protein is one of the early assembly proteins of the 50S ribosomal subunit, although it is not seen to bind rRNA by itself. It is important during the early stages of 50S assembly. This chain is Large ribosomal subunit protein uL13, found in Aromatoleum aromaticum (strain DSM 19018 / LMG 30748 / EbN1) (Azoarcus sp. (strain EbN1)).